A 94-amino-acid chain; its full sequence is Transcription factor PRE6 (94 aa).

The interval 1–20 (MSSRRSSRSRQSGSSRISDD) is disordered. The bHLH domain occupies 6-60 (SSRSRQSGSSRISDDQISDLVSKLQHLIPELRRRRSDKVSASKVLQETCNYIRNL).

Belongs to the bHLH protein family. Interacts with HFR1.

The protein localises to the cytoplasm. It localises to the nucleus. Functionally, atypical and probable non DNA-binding bHLH transcription factor that regulates light-mediated responses in day light conditions by binding and inhibiting the activity of the bHLH transcription factor HFR1, a critical regulator of light signaling and shade avoidance. Forms non-functional heterodimers with HFR1, causing liberation and activation of PIF4 from the transcriptionally inactive HFR1-PIF4 complex. The polypeptide is Transcription factor PRE6 (PRE6) (Arabidopsis thaliana (Mouse-ear cress)).